The sequence spans 343 residues: Phenylalanine--tRNA ligase alpha subunit (343 aa).

Glu-264 lines the Mg(2+) pocket.

It belongs to the class-II aminoacyl-tRNA synthetase family. Phe-tRNA synthetase alpha subunit type 1 subfamily. As to quaternary structure, tetramer of two alpha and two beta subunits. Mg(2+) is required as a cofactor.

It is found in the cytoplasm. It catalyses the reaction tRNA(Phe) + L-phenylalanine + ATP = L-phenylalanyl-tRNA(Phe) + AMP + diphosphate + H(+). In Aromatoleum aromaticum (strain DSM 19018 / LMG 30748 / EbN1) (Azoarcus sp. (strain EbN1)), this protein is Phenylalanine--tRNA ligase alpha subunit.